The sequence spans 121 residues: Type II secretion system protein I (121 aa).

Residues 1-6 constitute a propeptide, leader sequence; sequence MRRQKG. Met-7 is subject to N-methylmethionine. The helical transmembrane segment at 7-27 threads the bilayer; it reads MTLVEVLVALSVFALAGIAVL.

Belongs to the GSP I family. In terms of assembly, type II secretion is composed of four main components: the outer membrane complex, the inner membrane complex, the cytoplasmic secretion ATPase and the periplasm-spanning pseudopilus. Interacts with core component OutG. Cleaved by prepilin peptidase. In terms of processing, methylated by prepilin peptidase at the amino group of the N-terminal methionine once the leader sequence is cleaved by prepilin peptidase.

It localises to the cell inner membrane. Its function is as follows. Component of the type II secretion system required for the energy-dependent secretion of extracellular factors such as proteases and toxins from the periplasm. Part of the pseudopilus tip complex that is critical for the recognition and binding of secretion substrates. In Pectobacterium carotovorum subsp. carotovorum (Erwinia carotovora subsp. carotovora), this protein is Type II secretion system protein I (outI).